The sequence spans 372 residues: Heat-inducible transcription repressor HrcA (372 aa).

The disordered stretch occupies residues 300 to 334 (YGRSGAAGEPAGNDPVGEPETESETESQTNDTEPI).

This sequence belongs to the HrcA family.

Its function is as follows. Negative regulator of class I heat shock genes (grpE-dnaK-dnaJ and groELS operons). Prevents heat-shock induction of these operons. The chain is Heat-inducible transcription repressor HrcA from Bifidobacterium longum (strain DJO10A).